We begin with the raw amino-acid sequence, 251 residues long: Pyridoxine 5'-phosphate synthase (251 aa).

Position 7 (asparagine 7) interacts with 3-amino-2-oxopropyl phosphate. 9-10 (DH) lines the 1-deoxy-D-xylulose 5-phosphate pocket. Residue arginine 18 participates in 3-amino-2-oxopropyl phosphate binding. Histidine 43 functions as the Proton acceptor in the catalytic mechanism. 1-deoxy-D-xylulose 5-phosphate-binding residues include arginine 45 and histidine 50. Residue glutamate 70 is the Proton acceptor of the active site. Threonine 100 is a binding site for 1-deoxy-D-xylulose 5-phosphate. Catalysis depends on histidine 198, which acts as the Proton donor. 3-amino-2-oxopropyl phosphate-binding positions include alanine 199 and 220-221 (GH).

The protein belongs to the PNP synthase family. In terms of assembly, homooctamer; tetramer of dimers.

It localises to the cytoplasm. The catalysed reaction is 3-amino-2-oxopropyl phosphate + 1-deoxy-D-xylulose 5-phosphate = pyridoxine 5'-phosphate + phosphate + 2 H2O + H(+). Its pathway is cofactor biosynthesis; pyridoxine 5'-phosphate biosynthesis; pyridoxine 5'-phosphate from D-erythrose 4-phosphate: step 5/5. Its function is as follows. Catalyzes the complicated ring closure reaction between the two acyclic compounds 1-deoxy-D-xylulose-5-phosphate (DXP) and 3-amino-2-oxopropyl phosphate (1-amino-acetone-3-phosphate or AAP) to form pyridoxine 5'-phosphate (PNP) and inorganic phosphate. In Aromatoleum aromaticum (strain DSM 19018 / LMG 30748 / EbN1) (Azoarcus sp. (strain EbN1)), this protein is Pyridoxine 5'-phosphate synthase.